Here is an 83-residue protein sequence, read N- to C-terminus: Vitellogenesis-inhibiting hormone (83 aa).

3 disulfide bridges follow: Cys-15-Cys-52, Cys-32-Cys-48, and Cys-35-Cys-61.

Found in the sinus glands of both male and female. Found also in the brain; the neuroendocrine structures of the protocerebrum.

It localises to the secreted. Inhibits secondary vitellogenesis in females. Has no hyperglycemic or molt-inhibiting activity. The polypeptide is Vitellogenesis-inhibiting hormone (Armadillidium vulgare (Pillbug)).